A 256-amino-acid chain; its full sequence is Triosephosphate isomerase (256 aa).

9–11 serves as a coordination point for substrate; sequence NWK. His-97 serves as the catalytic Electrophile. The active-site Proton acceptor is the Glu-169. Residues Gly-175, Ser-214, and 235 to 236 contribute to the substrate site; that span reads GG.

The protein belongs to the triosephosphate isomerase family. As to quaternary structure, homodimer.

The protein resides in the cytoplasm. It catalyses the reaction D-glyceraldehyde 3-phosphate = dihydroxyacetone phosphate. The protein operates within carbohydrate biosynthesis; gluconeogenesis. It participates in carbohydrate degradation; glycolysis; D-glyceraldehyde 3-phosphate from glycerone phosphate: step 1/1. In terms of biological role, involved in the gluconeogenesis. Catalyzes stereospecifically the conversion of dihydroxyacetone phosphate (DHAP) to D-glyceraldehyde-3-phosphate (G3P). The sequence is that of Triosephosphate isomerase from Moritella marina (Vibrio marinus).